The sequence spans 264 residues: ATP synthase subunit a (264 aa).

6 consecutive transmembrane segments (helical) span residues 29-49, 89-109, 134-154, 177-197, 208-228, and 235-255; these read TWHI…LWLF, VIAP…FMDM, DLNI…YYSI, IPVN…SLAL, LIFI…ALGV, and LIFH…LTIV.

This sequence belongs to the ATPase A chain family. In terms of assembly, F-type ATPases have 2 components, CF(1) - the catalytic core - and CF(0) - the membrane proton channel. CF(1) has five subunits: alpha(3), beta(3), gamma(1), delta(1), epsilon(1). CF(0) has three main subunits: a(1), b(2) and c(9-12). The alpha and beta chains form an alternating ring which encloses part of the gamma chain. CF(1) is attached to CF(0) by a central stalk formed by the gamma and epsilon chains, while a peripheral stalk is formed by the delta and b chains.

Its subcellular location is the cell inner membrane. Key component of the proton channel; it plays a direct role in the translocation of protons across the membrane. The polypeptide is ATP synthase subunit a (Shewanella sediminis (strain HAW-EB3)).